The primary structure comprises 307 residues: Heparan sulfate glucosamine 3-O-sulfotransferase 1 (307 aa).

An N-terminal signal peptide occupies residues 1 to 20 (MAALLLGAVLLVAQPQLVPS). The N-linked (GlcNAc...) asparagine glycan is linked to Asn48. 3'-phosphoadenylyl sulfate contacts are provided by residues 64–68 (KGGTR), Arg147, and Ser155. N-linked (GlcNAc...) asparagine glycosylation is found at Asn192, Asn242, and Asn249. Position 255 (Tyr255) interacts with 3'-phosphoadenylyl sulfate. Cys256 and Cys265 are joined by a disulfide. 3'-phosphoadenylyl sulfate is bound at residue 270–274 (KGRAH).

This sequence belongs to the sulfotransferase 1 family. Highly expressed in the brain and kidney and weakly expressed in the heart, lung and placenta.

The protein resides in the golgi apparatus lumen. It carries out the reaction alpha-D-glucosaminyl-[heparan sulfate](n) + 3'-phosphoadenylyl sulfate = 3-sulfo-alpha-D-glucosaminyl-[heparan sulfate](n) + adenosine 3',5'-bisphosphate + H(+). In terms of biological role, sulfotransferase that utilizes 3'-phospho-5'-adenylyl sulfate (PAPS) to catalyze the transfer of a sulfo group to position 3 of glucosamine residues in heparan. Catalyzes the rate limiting step in the biosynthesis of heparan sulfate (HSact). This modification is a crucial step in the biosynthesis of anticoagulant heparan sulfate as it completes the structure of the antithrombin pentasaccharide binding site. The polypeptide is Heparan sulfate glucosamine 3-O-sulfotransferase 1 (HS3ST1) (Homo sapiens (Human)).